Consider the following 26-residue polypeptide: Conotoxin reg6(gamma) (26 aa).

Positions 1 to 12 (RVLEPGXEDPDV) are enriched in acidic residues. A disordered region spans residues 1-26 (RVLEPGXEDPDVGEPAGEYEHHLLEX). At Glu-4 the chain carries 4-carboxyglutamate. Pro-5 is subject to 4-hydroxyproline. At Glu-8 the chain carries 4-carboxyglutamate. 4-hydroxyproline is present on Pro-10. Position 14 is a 4-carboxyglutamate (Glu-14). At Pro-15 the chain carries 4-hydroxyproline. A 4-carboxyglutamate mark is found at Glu-18, Glu-20, and Glu-25.

In terms of tissue distribution, expressed by the venom duct.

The protein resides in the secreted. This is Conotoxin reg6(gamma) from Conus regius (Crown cone).